The chain runs to 294 residues: MIYGSIVALVTPMNSDGTVDYKSLESLVEYHIAQGTDAIVAVGTTGESATLPAKEHIAVVEQTVKFAAGRIPIIGGNGANATAEAVELTKGLSNVGVAAMLGVTPYYNKPTPKGLIAHYTAVAASTDVPQILYNVPGRTAVDMRPETVAQLVGIKNIIGVKEATGDLSRVKELRNLCGDDFLLYSGDDATAREFLSLGGNGVISVANNIVPKQFKAMCDAALSGDVSAALSAEESIKELFSVLFCEANPIPVKWAVHRMGLISNGTIRLPLTELSTEFHGLLLEAMKNARIEVK.

Residue Thr45 participates in pyruvate binding. Catalysis depends on Tyr133, which acts as the Proton donor/acceptor. Lys161 functions as the Schiff-base intermediate with substrate in the catalytic mechanism. Residue Ile203 participates in pyruvate binding.

This sequence belongs to the DapA family. In terms of assembly, homotetramer; dimer of dimers.

The protein resides in the cytoplasm. It catalyses the reaction L-aspartate 4-semialdehyde + pyruvate = (2S,4S)-4-hydroxy-2,3,4,5-tetrahydrodipicolinate + H2O + H(+). Its pathway is amino-acid biosynthesis; L-lysine biosynthesis via DAP pathway; (S)-tetrahydrodipicolinate from L-aspartate: step 3/4. In terms of biological role, catalyzes the condensation of (S)-aspartate-beta-semialdehyde [(S)-ASA] and pyruvate to 4-hydroxy-tetrahydrodipicolinate (HTPA). The chain is 4-hydroxy-tetrahydrodipicolinate synthase from Shewanella pealeana (strain ATCC 700345 / ANG-SQ1).